A 239-amino-acid chain; its full sequence is 1-(5-phosphoribosyl)-5-[(5-phosphoribosylamino)methylideneamino] imidazole-4-carboxamide isomerase (239 aa).

Asp8 functions as the Proton acceptor in the catalytic mechanism. The active-site Proton donor is the Asp129.

The protein belongs to the HisA/HisF family.

The protein localises to the cytoplasm. It carries out the reaction 1-(5-phospho-beta-D-ribosyl)-5-[(5-phospho-beta-D-ribosylamino)methylideneamino]imidazole-4-carboxamide = 5-[(5-phospho-1-deoxy-D-ribulos-1-ylimino)methylamino]-1-(5-phospho-beta-D-ribosyl)imidazole-4-carboxamide. It functions in the pathway amino-acid biosynthesis; L-histidine biosynthesis; L-histidine from 5-phospho-alpha-D-ribose 1-diphosphate: step 4/9. In Cereibacter sphaeroides (strain ATCC 17029 / ATH 2.4.9) (Rhodobacter sphaeroides), this protein is 1-(5-phosphoribosyl)-5-[(5-phosphoribosylamino)methylideneamino] imidazole-4-carboxamide isomerase.